We begin with the raw amino-acid sequence, 552 residues long: Formate--tetrahydrofolate ligase (552 aa).

63–70 (TPFGEGKT) serves as a coordination point for ATP.

The protein belongs to the formate--tetrahydrofolate ligase family.

It catalyses the reaction (6S)-5,6,7,8-tetrahydrofolate + formate + ATP = (6R)-10-formyltetrahydrofolate + ADP + phosphate. It participates in one-carbon metabolism; tetrahydrofolate interconversion. The polypeptide is Formate--tetrahydrofolate ligase (Caldicellulosiruptor bescii (strain ATCC BAA-1888 / DSM 6725 / KCTC 15123 / Z-1320) (Anaerocellum thermophilum)).